Reading from the N-terminus, the 615-residue chain is Chaperone protein DnaK (615 aa).

Thr-174 carries the phosphothreonine; by autocatalysis modification. Residues Gln-581 to Lys-615 are disordered. Positions Asp-586–Asp-596 are enriched in basic and acidic residues. Residues Asn-598–Val-607 show a composition bias toward acidic residues.

This sequence belongs to the heat shock protein 70 family.

Acts as a chaperone. The polypeptide is Chaperone protein DnaK (Leuconostoc mesenteroides subsp. mesenteroides (strain ATCC 8293 / DSM 20343 / BCRC 11652 / CCM 1803 / JCM 6124 / NCDO 523 / NBRC 100496 / NCIMB 8023 / NCTC 12954 / NRRL B-1118 / 37Y)).